The primary structure comprises 235 residues: C-&gt;U-editing enzyme APOBEC-1 (235 aa).

One can recognise a CMP/dCMP-type deaminase domain in the interval 10-131 (GDATLRRRIK…MDQQHRQGLK (122 aa)). His60 serves as a coordination point for Zn(2+). Glu62 serves as the catalytic Proton donor. The Zn(2+) site is built by Cys92 and Cys95.

This sequence belongs to the cytidine and deoxycytidylate deaminase family. In terms of assembly, homodimer. Interacts with A1CF; form an mRNA editing complex. Interacts with RBM47; form an mRNA editing complex. Found in a complex with CELF2/CUGBP2 and A1CF. Interacts with HNRPAB. Interacts with SYNCRIP. It depends on Zn(2+) as a cofactor.

The protein localises to the cytoplasm. Its subcellular location is the nucleus. It carries out the reaction a cytidine in mRNA + H2O + H(+) = a uridine in mRNA + NH4(+). It catalyses the reaction cytidine(6666) in apoB mRNA + H2O + H(+) = uridine(6666) in apoB mRNA + NH4(+). Functionally, cytidine deaminase catalyzing the cytidine to uridine postranscriptional editing of a variety of mRNAs. Form complexes with cofactors that confer differential editing activity and selectivity. Responsible for the postranscriptional editing of a CAA codon for Gln to a UAA codon for stop in the apolipoprotein B mRNA. Also involved in CGA (Arg) to UGA (Stop) editing in the NF1 mRNA. May also play a role in the epigenetic regulation of gene expression by participating in DNA demethylation. The chain is C-&gt;U-editing enzyme APOBEC-1 from Monodelphis domestica (Gray short-tailed opossum).